A 154-amino-acid chain; its full sequence is Proteinase inhibitor type-2 P303.51 (154 aa).

A signal peptide spans 1–25; sequence MAVHKEVNFVAYLLIVLGLLVLVSA. 2 repeat units span residues 31-87 and 88-147. 8 disulfides stabilise this stretch: Cys34–Cys122, Cys38–Cys118, Cys46–Cys128, Cys58–Cys95, Cys61–Cys79, Cys62–Cys91, Cys68–Cys104, and Cys121–Cys139.

It belongs to the protease inhibitor I20 (potato type II proteinase inhibitor) family.

The polypeptide is Proteinase inhibitor type-2 P303.51 (Solanum tuberosum (Potato)).